The following is a 204-amino-acid chain: Large ribosomal subunit protein uL13 (204 aa).

The protein belongs to the universal ribosomal protein uL13 family.

This chain is Large ribosomal subunit protein uL13 (RpL13A), found in Choristoneura parallela (Spotted fireworm moth).